The primary structure comprises 149 residues: Arginine regulator (149 aa).

Belongs to the ArgR family.

It is found in the cytoplasm. Its pathway is amino-acid degradation; L-arginine degradation via ADI pathway. Regulates the transcription of the arc operon, involved in arginine catabolism. This chain is Arginine regulator (argR1), found in Bacillus thuringiensis subsp. konkukian (strain 97-27).